The following is a 338-amino-acid chain: MKNSADITVLGAGSYGSALAISLASNGHKTLLWGHDPVHMQTLAQDKCNQAFLPGIAFPDCLQIEADLAKALAASNNVLVVVPSHVFGTVLEQAKPLLRSDARIVWATKGLEPETGRLLQDVARDVLGEQYPLAVLSGPTFAKELAMGLPTAISVAGTCPTFTNDLVELLHSPKRLRVYANDDFTGLQLGGAVKNVIAIGAGMSDGIGFGANARTALITRGLVELTRLGEALGANAATFMGMAGLGDLVLTCTDNQSRNRRFGLALGKGCDVMTAQAEIGQVVEGYRNTKEVFTLAKRLGVEMPITEQIYQVLYQGKSPVDAAKELLSREKKSETPAQ.

Residues S14, Y15, H35, and K109 each contribute to the NADPH site. K109, G138, and T140 together coordinate sn-glycerol 3-phosphate. An NADPH-binding site is contributed by A142. K194, D247, S257, R258, and N259 together coordinate sn-glycerol 3-phosphate. The Proton acceptor role is filled by K194. Residue R258 participates in NADPH binding. The NADPH site is built by V282 and E284.

This sequence belongs to the NAD-dependent glycerol-3-phosphate dehydrogenase family.

The protein localises to the cytoplasm. The catalysed reaction is sn-glycerol 3-phosphate + NAD(+) = dihydroxyacetone phosphate + NADH + H(+). The enzyme catalyses sn-glycerol 3-phosphate + NADP(+) = dihydroxyacetone phosphate + NADPH + H(+). It functions in the pathway membrane lipid metabolism; glycerophospholipid metabolism. Catalyzes the reduction of the glycolytic intermediate dihydroxyacetone phosphate (DHAP) to sn-glycerol 3-phosphate (G3P), the key precursor for phospholipid synthesis. The chain is Glycerol-3-phosphate dehydrogenase [NAD(P)+] from Shewanella baltica (strain OS195).